A 275-amino-acid chain; its full sequence is Large ribosomal subunit protein uL2cz (275 aa).

2 disordered regions span residues 1–22 (MAIH…DSQV) and 226–275 (NPVD…RRRK).

It belongs to the universal ribosomal protein uL2 family. In terms of assembly, part of the 50S ribosomal subunit.

It is found in the plastid. The protein localises to the chloroplast. This is Large ribosomal subunit protein uL2cz (rpl2-A) from Chloranthus spicatus (Chulantree).